A 396-amino-acid chain; its full sequence is Interactor of constitutive active ROPs 5 (396 aa).

2 disordered regions span residues 1–49 (MQTP…TQIP) and 99–122 (ALKR…NASE). Coiled coils occupy residues 67-124 (KKRT…SEDS) and 158-366 (LSSA…TAAS). Residues 99–115 (ALKREAQEEAEDAKHQL) are compositionally biased toward basic and acidic residues.

This sequence belongs to the ICR family. Component of the active ARAC10-IRC5-KIN13A complex. Homooligomer. Interacts (via C-terminus) with ARAC4, ARAC10, ARAC11 and (via N-terminus) with KIN13A (via C-terminus), but no interactions with SEC3A. Expressed in xylem cells in the roots and in stamens, petals and pollen.

Its subcellular location is the cell membrane. It is found in the cytoplasm. It localises to the cytoskeleton. Its function is as follows. ROP effector binding specifically activated ROPs and linking them to the microtubule cytoskeleton. Involved in ROP-regulated polar growth. Involved in local disassembly of cortical microtubules when associated with ARAC10 and KIN13A and conversely also mediates the elimination of ARAC10 from the plasma membrane by the cortical microtubules. Accumulates at the plus end of shrinking microtubules. Targets KIN13A to microtubules. In Arabidopsis thaliana (Mouse-ear cress), this protein is Interactor of constitutive active ROPs 5 (ICR5).